The following is a 417-amino-acid chain: NADH-quinone oxidoreductase subunit D (417 aa).

The protein belongs to the complex I 49 kDa subunit family. In terms of assembly, NDH-1 is composed of 14 different subunits. Subunits NuoB, C, D, E, F, and G constitute the peripheral sector of the complex.

It is found in the cell inner membrane. The enzyme catalyses a quinone + NADH + 5 H(+)(in) = a quinol + NAD(+) + 4 H(+)(out). Its function is as follows. NDH-1 shuttles electrons from NADH, via FMN and iron-sulfur (Fe-S) centers, to quinones in the respiratory chain. The immediate electron acceptor for the enzyme in this species is believed to be ubiquinone. Couples the redox reaction to proton translocation (for every two electrons transferred, four hydrogen ions are translocated across the cytoplasmic membrane), and thus conserves the redox energy in a proton gradient. The sequence is that of NADH-quinone oxidoreductase subunit D from Francisella tularensis subsp. holarctica (strain FTNF002-00 / FTA).